The primary structure comprises 231 residues: Uracil phosphoribosyltransferase (231 aa).

38-42 (KGLVR) lines the GTP pocket. 5-phospho-alpha-D-ribose 1-diphosphate-binding positions include Arg87, Arg112, and 140 to 148 (DPMIATGST). Residues Ile203 and 208-210 (GDA) each bind uracil. Asp209 contributes to the 5-phospho-alpha-D-ribose 1-diphosphate binding site.

The protein belongs to the UPRTase family. Mg(2+) serves as cofactor.

The enzyme catalyses UMP + diphosphate = 5-phospho-alpha-D-ribose 1-diphosphate + uracil. The protein operates within pyrimidine metabolism; UMP biosynthesis via salvage pathway; UMP from uracil: step 1/1. With respect to regulation, allosterically activated by GTP. Catalyzes the conversion of uracil and 5-phospho-alpha-D-ribose 1-diphosphate (PRPP) to UMP and diphosphate. The chain is Uracil phosphoribosyltransferase from Methanococcus maripaludis (strain C5 / ATCC BAA-1333).